The sequence spans 238 residues: Aspartate/glutamate leucyltransferase (238 aa).

The protein belongs to the R-transferase family. Bpt subfamily.

The protein resides in the cytoplasm. The catalysed reaction is N-terminal L-glutamyl-[protein] + L-leucyl-tRNA(Leu) = N-terminal L-leucyl-L-glutamyl-[protein] + tRNA(Leu) + H(+). It carries out the reaction N-terminal L-aspartyl-[protein] + L-leucyl-tRNA(Leu) = N-terminal L-leucyl-L-aspartyl-[protein] + tRNA(Leu) + H(+). Its function is as follows. Functions in the N-end rule pathway of protein degradation where it conjugates Leu from its aminoacyl-tRNA to the N-termini of proteins containing an N-terminal aspartate or glutamate. In Shewanella sp. (strain MR-7), this protein is Aspartate/glutamate leucyltransferase.